Here is a 421-residue protein sequence, read N- to C-terminus: Acetate kinase (421 aa).

N7 contributes to the Mg(2+) binding site. K14 is an ATP binding site. R91 lines the substrate pocket. The active-site Proton donor/acceptor is the D148. ATP-binding positions include 208 to 212 (HIGNG) and 283 to 285 (DRR). Mg(2+) is bound at residue E387.

This sequence belongs to the acetokinase family. As to quaternary structure, homodimer. Requires Mg(2+) as cofactor. Mn(2+) serves as cofactor.

It localises to the cytoplasm. The catalysed reaction is acetate + ATP = acetyl phosphate + ADP. It participates in metabolic intermediate biosynthesis; acetyl-CoA biosynthesis; acetyl-CoA from acetate: step 1/2. In terms of biological role, catalyzes the formation of acetyl phosphate from acetate and ATP. Can also catalyze the reverse reaction. This Trichlorobacter lovleyi (strain ATCC BAA-1151 / DSM 17278 / SZ) (Geobacter lovleyi) protein is Acetate kinase.